A 222-amino-acid chain; its full sequence is Probable GTP-binding protein EngB (222 aa).

Residues 22-197 (TSAEIAFVGR…ETVVAGWFAG (176 aa)) enclose the EngB-type G domain. Positions 37 and 59 each coordinate Mg(2+). Residues 201–222 (RQADELTDGEPDDRTPDPDSAS) are disordered. Over residues 212-222 (DDRTPDPDSAS) the composition is skewed to basic and acidic residues.

This sequence belongs to the TRAFAC class TrmE-Era-EngA-EngB-Septin-like GTPase superfamily. EngB GTPase family. Mg(2+) is required as a cofactor.

Functionally, necessary for normal cell division and for the maintenance of normal septation. This chain is Probable GTP-binding protein EngB, found in Laribacter hongkongensis (strain HLHK9).